Here is a 285-residue protein sequence, read N- to C-terminus: Chalcone synthase 6-4 (285 aa).

Cysteine 60 is a catalytic residue.

Belongs to the thiolase-like superfamily. Chalcone/stilbene synthases family.

It catalyses the reaction (E)-4-coumaroyl-CoA + 3 malonyl-CoA + 3 H(+) = 2',4,4',6'-tetrahydroxychalcone + 3 CO2 + 4 CoA. The protein operates within secondary metabolite biosynthesis; flavonoid biosynthesis. Its function is as follows. The primary product of this enzyme is 4,2',4',6'-tetrahydroxychalcone (also termed naringenin-chalcone or chalcone) which can under specific conditions spontaneously isomerize into naringenin. The sequence is that of Chalcone synthase 6-4 (CHS6-4) from Medicago sativa (Alfalfa).